The sequence spans 487 residues: Cobyric acid synthase (487 aa).

In terms of domain architecture, GATase cobBQ-type spans 249–435 (GIDIAIVRLP…IHGIFDEGDF (187 aa)). C330 functions as the Nucleophile in the catalytic mechanism. The active site involves H427.

Belongs to the CobB/CobQ family. CobQ subfamily.

The protein operates within cofactor biosynthesis; adenosylcobalamin biosynthesis. In terms of biological role, catalyzes amidations at positions B, D, E, and G on adenosylcobyrinic A,C-diamide. NH(2) groups are provided by glutamine, and one molecule of ATP is hydrogenolyzed for each amidation. This chain is Cobyric acid synthase, found in Clostridium perfringens (strain SM101 / Type A).